A 126-amino-acid polypeptide reads, in one-letter code: UPF0102 protein BCAN_A0183 (126 aa).

It belongs to the UPF0102 family.

The protein is UPF0102 protein BCAN_A0183 of Brucella canis (strain ATCC 23365 / NCTC 10854 / RM-666).